The primary structure comprises 176 residues: Ribosome maturation factor RimM (176 aa).

Residues 100 to 173 (KDEYHYHDLI…WLLINPPPGL (74 aa)) enclose the PRC barrel domain.

Belongs to the RimM family. In terms of assembly, binds ribosomal protein uS19.

The protein resides in the cytoplasm. Its function is as follows. An accessory protein needed during the final step in the assembly of 30S ribosomal subunit, possibly for assembly of the head region. Essential for efficient processing of 16S rRNA. May be needed both before and after RbfA during the maturation of 16S rRNA. It has affinity for free ribosomal 30S subunits but not for 70S ribosomes. This Prochlorococcus marinus (strain NATL1A) protein is Ribosome maturation factor RimM.